Consider the following 322-residue polypeptide: uncharacterized protein (322 aa).

The interval 269 to 289 is disordered; that stretch reads QDEEEEPRDERRPRRRLGKAQ.

This is an uncharacterized protein from Sinorhizobium fredii (strain NBRC 101917 / NGR234).